The chain runs to 341 residues: Trace amine-associated receptor 13c (341 aa).

Over 1–34 (MDLSSQEYDPSQFCFPAVNNSCLKGTHHVSTQTV) the chain is Extracellular. The N-linked (GlcNAc...) asparagine glycan is linked to Asn-19. 2 disulfides stabilise this stretch: Cys-22–Cys-186 and Cys-105–Cys-186. A helical transmembrane segment spans residues 35–55 (VYLILASAMTVTVLGNSVVII). At 56–68 (SIAHFKQLQTPTN) the chain is on the cytoplasmic side. A helical membrane pass occupies residues 69-89 (ILVMSLALADLLLGLVVMPFS). Over 90-105 (MIRSVDGCWYYGETFC) the chain is Extracellular. Residues 106 to 126 (LLHTGFDLFLTSVSIFHLIFI) form a helical membrane-spanning segment. Over 127–147 (AVDRHQAVCFPLQYPTRITIP) the chain is Cytoplasmic. Residues 148 to 168 (VAWVMVMISWSMAAFYSYGVV) form a helical membrane-spanning segment. The Extracellular portion of the chain corresponds to 169–195 (YSKANLEGLEEYIASVYCMGGCTLYFN). Residues 196–219 (ALWSVLDTLLTFFLPCSVMVGLYA) form a helical membrane-spanning segment. Residues 220-257 (RIFVVAKKHIKSITEANQNENENVFKNPRRSERKAAKT) are Cytoplasmic-facing. A helical membrane pass occupies residues 258–278 (LGIVVGAFILCWLPFFINSLV). Residues 279-292 (DPYINFSTPYALFD) are Extracellular-facing. An N-linked (GlcNAc...) asparagine glycan is attached at Asn-283. Residues 293 to 313 (AFGWLGYTNSTLNPIIYGLFY) form a helical membrane-spanning segment. Topologically, residues 314-341 (PWFRKTLSLIVTLRIFEPNSSDINLFTV) are cytoplasmic.

It belongs to the G-protein coupled receptor 1 family. In terms of tissue distribution, expressed in olfactory epithelium (at protein level). Detected in a sparse population of olfactory sensory neurons.

It localises to the cell membrane. Functionally, olfactory receptor for medium length odd-chained diamines including cadaverine which is generated by bacterial decarboxylation of the basic amino acid lysine and contributes to the odor of decomposing tissue. Mediates pronounced innate aversion behavior to cadaverine. In Danio rerio (Zebrafish), this protein is Trace amine-associated receptor 13c.